A 772-amino-acid chain; its full sequence is MTEQAQREAELKRRKVRKGTHSCWECRRRKIRCQFGAGNDTVCLPCQARGSTCRSQEYVDKDARPSQQPDRRMAQRLGRLEELMARLVDRILPEAGGQLANRSTTQSNRGSRSPSPDSAQNEGLAFHQTLDVLEASLGPNTPAGLLLGLRDAAQPASMLTPESDHSPAPSKLTPSRNSKTSRSLYALFPPQEALPVLMKANAGPYYLTSLFSSFRDLIEGKVETANSVTVIPPAVSHPTVLARRLLQICICMQQLNPGYDTSPLQIKGTIPEYMNNVVTTVTNLVTSIDEIVSTGEGLESLVLLGLWHANAGNLRKAWLTYRRALSLGQLMGIDRGSTRALKFVDTNTDPQKHSTPAGLWYRINACDRASSLLLGLPAGDLDNSFATEEAMKRDTAMERLEKIHVVLTGRIIERNATRSSSEAYAVTQSIDSELERAATSMGADWWSEPDFDVTDETGHKLGEMLRQMLQMRHFDLLILLHLPYMLRDPSENRYDYSKTTCARSSREVLKRFIPFRSKVTAAWACRHVDYSALVASMTLLVGYLRQHQHATEPAPTCKERNEDRKLIEVVRERMQHVAITNRDKVTQESADILGQMMPILDLIDRSLMGDLSECNSHVLKCLHLKVPYLGTINFHPNVNVPEGQSANTPYSRRDNAGTIPGPVSVAGAATSGLEQLQPRMAGLSTAHDAAMPSVTAMSQGGDSMQVDMATFDPALLPPDTSIDGMYMDFDEQPQDGVHEIPDLMAGVEDWVLQGLDTTYWSLLNGNNMAWGG.

The zn(2)-C6 fungal-type DNA-binding region spans Cys-23–Cys-53. Disordered stretches follow at residues Glu-94–Asn-121 and Ala-156–Thr-180. The span at Ala-100–Asn-121 shows a compositional bias: polar residues.

The protein resides in the nucleus. Its pathway is antibiotic biosynthesis. Functionally, transcription factor; part of the gene cluster that mediates the biosynthesis of sordarin and hypoxysordarin, glycoside antibiotics with a unique tetracyclic diterpene aglycone structure. First, the geranylgeranyl diphosphate synthase sdnC constructs GGDP from farnesyl diphosphate and isopentenyl diphosphate. The diterpene cyclase sdnA then catalyzes the cyclization of GGDP to afford cycloaraneosene. Cycloaraneosene is then hydroxylated four times by the putative cytochrome P450 monooxygenases sdnB, sdnE, sdnF and sdnH to give a hydroxylated cycloaraneosene derivative such as cycloaraneosene-8,9,13,19-tetraol. Although the order of the hydroxylations is unclear, at least C8, C9 and C13 of the cycloaraneosene skeleton are hydroxylated before the sordaricin formation. Dehydration of the 13-hydroxy group of the hydroxylated cycloaraneosene derivative might be catalyzed by an unassigned hypothetical protein such as sdnG and sdnP to construct the cyclopentadiene moiety. The FAD-dependent oxidoreductase sdnN is proposed to catalyze the oxidation at C9 of the hydroxylated cycloaraneosene derivative and also catalyze the Baeyer-Villiger oxidation to give the lactone intermediate. The presumed lactone intermediate would be hydrolyzed to give an acrolein moiety and a carboxylate moiety. Then, [4+2]cycloaddition would occur between the acrolein moiety and the cyclopentadiene moiety to give sordaricin. SdnN might also be involved in the [4+2]cycloaddition after the hypothesized oxidation to accommodate the oxidized product and prompt the [4+2]cycloaddition. GDP-6-deoxy-D-altrose may be biosynthesized from GDP-D-mannose by the putative GDP-mannose-4,6-dehydratase sdnI and the short-chain dehydrogenase sdnK. The glycosyltransferase sdnJ catalyzes the attachment of 6-deoxy-D-altrose onto the 19-hydroxy group of sordaricin to give 4'-O-demethylsordarin. The methyltransferase sdnD would complete the biosynthesis of sordarin. Sordarin can be further modified into hypoxysordarin. The unique acyl chain at the 3'-hydroxy group of hypoxysordarin would be constructed by an iterative type I PKS sdnO and the trans-acting polyketide methyltransferase sdnL. SdnL would be responsible for the introduction of an alpha-methyl group of the polyketide chain. Alternatively, the beta-lactamase-like protein sdnR might be responsible for the cleavage and transfer of the polyketide chain from the PKS sdnO to sordarin. Two putative cytochrome P450 monooxygenases, sdnQ and sdnT, might catalyze the epoxidations of the polyketide chain to complete the biosynthesis of hypoxysordarin. Transcriptional regulators sdnM and sdnS are presumably encoded for the transcriptional regulation of the expression of the sdn gene cluster. This is Transcription factor sdnS from Sordaria araneosa (Pleurage araneosa).